We begin with the raw amino-acid sequence, 1353 residues long: Patatin-like phospholipase domain-containing protein ZK370.4 (1353 aa).

A helical membrane pass occupies residues 12–32; that stretch reads IFLVTFIYNHVLLILFTVCII. A compositionally biased stretch (low complexity) spans 49 to 64; it reads TPSSASSSATPSSRNS. Disordered stretches follow at residues 49–188 and 199–218; these read TPSS…STAF and SRSY…VRPP. A compositionally biased stretch (polar residues) spans 91–123; that stretch reads SPKSGTPTNTQTIEPPTSLNLNMVNSASGSNLS. 2 stretches are compositionally biased toward basic residues: residues 126 to 138 and 170 to 184; these read RRMR…KKLY and PRRR…RRRQ. Residues 245–372, 444–581, and 570–692 contribute to the a nucleoside 3',5'-cyclic phosphate site; these read LKML…VITR, FGLV…VLRR, and IYLP…LGQY. A PNPLA domain is found at 942 to 1108; that stretch reads LVLGGGGARG…VNNVPADVMR (167 aa). The GXGXXG motif lies at 946 to 951; that stretch reads GGGARG. The short motif at 973-977 is the GXSXG element; it reads GTSIG. The active-site Nucleophile is the Ser975. Asp1095 serves as the catalytic Proton acceptor. Positions 1095 to 1097 match the DGA/G motif; the sequence is DGG. Disordered stretches follow at residues 1230-1249, 1274-1293, and 1305-1353; these read EKET…PDVS, SMSL…DHFL, and YEEE…PPSS. The span at 1328–1337 shows a compositional bias: low complexity; that stretch reads GPPSSSSSGG.

This sequence belongs to the NTE family.

Its subcellular location is the membrane. The sequence is that of Patatin-like phospholipase domain-containing protein ZK370.4 from Caenorhabditis elegans.